Consider the following 164-residue polypeptide: Phosphopantetheine adenylyltransferase (164 aa).

Serine 9 contributes to the substrate binding site. Residues 9-10 (SF) and histidine 17 each bind ATP. Substrate contacts are provided by lysine 41, leucine 73, and arginine 87. Residues 88-90 (GLR), glutamate 98, and 123-129 (YTFLSSS) each bind ATP.

The protein belongs to the bacterial CoaD family. Homohexamer. It depends on Mg(2+) as a cofactor.

It is found in the cytoplasm. The enzyme catalyses (R)-4'-phosphopantetheine + ATP + H(+) = 3'-dephospho-CoA + diphosphate. The protein operates within cofactor biosynthesis; coenzyme A biosynthesis; CoA from (R)-pantothenate: step 4/5. Functionally, reversibly transfers an adenylyl group from ATP to 4'-phosphopantetheine, yielding dephospho-CoA (dPCoA) and pyrophosphate. This Dictyoglomus thermophilum (strain ATCC 35947 / DSM 3960 / H-6-12) protein is Phosphopantetheine adenylyltransferase.